The chain runs to 337 residues: MLEKFARYPLTFGPTPIEKLERLSKHLGGNVEIYAKREDCNSGLAYGGNKLRKLEYIIPDAIASNADTLVSIGGVQSNHTRMIAAVAAKIGMKCRLVQEAWVPHEDAVYDRVGNIMLSRIMGADVRLVDDGFDIGIRKSWEQAIEEVKAAGGKPYAIPAGASVHKYGGLGYVGFAEEVRKQEAELGFKFDYIVVCTVTGSTHAGMLVGFAADGRARKVIGIDGSFTPAQTKAQVLSIAQNTAKLVELGKDIVADDVVLIEDYAYPAYGVPSEETKEAIRLTARLEAMITDPVYEGKSMQGLIDLTQKGYFEKGAKVLYAHLGGAPALNGYGYAFRNG.

K50 carries the post-translational modification N6-(pyridoxal phosphate)lysine. The active-site Nucleophile is S77.

This sequence belongs to the ACC deaminase/D-cysteine desulfhydrase family. Homotrimer. Pyridoxal 5'-phosphate serves as cofactor.

The catalysed reaction is 1-aminocyclopropane-1-carboxylate + H2O = 2-oxobutanoate + NH4(+). Functionally, catalyzes a cyclopropane ring-opening reaction, the irreversible conversion of 1-aminocyclopropane-1-carboxylate (ACC) to ammonia and alpha-ketobutyrate. Allows growth on ACC as a nitrogen source. The polypeptide is 1-aminocyclopropane-1-carboxylate deaminase (Bradyrhizobium diazoefficiens (strain JCM 10833 / BCRC 13528 / IAM 13628 / NBRC 14792 / USDA 110)).